Consider the following 1054-residue polypeptide: SMC5-SMC6 complex localization factor protein 1 (1054 aa).

BRCT domains lie at 2-80 and 121-199; these read EDSA…AKSG and PGAF…LLEK. Residues 283–303 form a disordered region; that stretch reads RHGLENQKETKKKDKNIQRSY. The span at 284–299 shows a compositional bias: basic and acidic residues; sequence HGLENQKETKKKDKNI. The tract at residues 407-1054 is NSE5-like domain; mediates interaction with SLF2; that stretch reads PRGILNLIEN…MMCQSITELS (648 aa). ANK repeat units follow at residues 802–832, 836–865, and 870–900; these read KGETALHRVCIKNQVEKLIILLSLPGIDINV, AGWTPLHEACNYGNTECVQEILQRCPEVDL, and DGVTPLHDALSNGHVEIGKLLLQRGGPELLQ.

As to quaternary structure, interacts (via BRCT domains) with RAD18 (via C-terminus and phosphorylated form); this interaction is required for efficient repair of UV-induced DNA damage. Interacts (via N-terminus) with SLF2; this interaction links RAD18 to the SMC5-SMC6 complex. Interacts (via BRCT domains) with RAD18; this interaction occurs in a SLF2-independent manner. Interacts with SMC6. As to expression, widely expressed. Expressed in testis. Expressed in spermatocytes.

It is found in the nucleus. It localises to the cytoplasm. The protein localises to the cytoskeleton. The protein resides in the microtubule organizing center. Its subcellular location is the centrosome. In terms of biological role, plays a role in the DNA damage response (DDR) pathway by regulating postreplication repair of UV-damaged DNA and genomic stability maintenance. The SLF1-SLF2 complex acts to link RAD18 with the SMC5-SMC6 complex at replication-coupled interstrand cross-links (ICL) and DNA double-strand breaks (DSBs) sites on chromatin during DNA repair in response to stalled replication forks. Promotes the recruitment of SLF2 and the SMC5-SMC6 complex to DNA lesions. This Mus musculus (Mouse) protein is SMC5-SMC6 complex localization factor protein 1.